Here is a 218-residue protein sequence, read N- to C-terminus: uncharacterized protein (218 aa).

The next 5 helical transmembrane spans lie at 19-39 (VFGF…FTII), 92-112 (FDYA…VSAV), 124-144 (YGLI…MILA), 161-181 (LLFE…IAPF), and 196-216 (YILM…EILL).

The protein resides in the cell membrane. This is an uncharacterized protein from Methanocaldococcus jannaschii (strain ATCC 43067 / DSM 2661 / JAL-1 / JCM 10045 / NBRC 100440) (Methanococcus jannaschii).